Consider the following 393-residue polypeptide: Bifunctional enzyme Fae/Hps (393 aa).

The segment at 1–161 (MYLVGEALIG…YEKDRAAHGI (161 aa)) is formaldehyde-activating enzyme. His-17 acts as the Proton donor in catalysis. Substrate contacts are provided by Asp-19, Leu-48, Lys-66, Thr-68, and Gln-83. A 3-hexulose-6-phosphate synthase region spans residues 162 to 393 (MGFKVQRLWD…IDQFRIMTDF (232 aa)).

This sequence in the N-terminal section; belongs to the formaldehyde-activating enzyme family. The protein in the C-terminal section; belongs to the HPS/KGPDC family. HPS subfamily.

It carries out the reaction 5,6,7,8-tetrahydromethanopterin + formaldehyde = 5,10-methylenetetrahydromethanopterin + H2O. The catalysed reaction is D-ribulose 5-phosphate + formaldehyde = D-arabino-hex-3-ulose 6-phosphate. The protein operates within carbohydrate biosynthesis; D-ribose 5-phosphate biosynthesis. In terms of biological role, catalyzes the condensation of formaldehyde with tetrahydromethanopterin (H(4)MPT) to 5,10-methylenetetrahydromethanopterin. Catalyzes the reversible formation of ribulose-5-phosphate and formaldehyde from 3-hexulose-6-phosphate. This is Bifunctional enzyme Fae/Hps from Methanoregula boonei (strain DSM 21154 / JCM 14090 / 6A8).